A 763-amino-acid polypeptide reads, in one-letter code: 5-methyltetrahydropteroyltriglutamate--homocysteine methyltransferase (763 aa).

Residues 16–19 (RELK) and K121 each bind 5-methyltetrahydropteroyltri-L-glutamate. Residues 440-442 (IGS) and E493 contribute to the L-homocysteine site. Residues 440–442 (IGS) and E493 each bind L-methionine. Residues 524-525 (RC) and W570 contribute to the 5-methyltetrahydropteroyltri-L-glutamate site. Residue D608 coordinates L-homocysteine. D608 lines the L-methionine pocket. Position 614 (E614) interacts with 5-methyltetrahydropteroyltri-L-glutamate. The Zn(2+) site is built by H650, C652, and E674. H703 acts as the Proton donor in catalysis. Residue C735 coordinates Zn(2+).

It belongs to the vitamin-B12 independent methionine synthase family. The cofactor is Zn(2+).

The catalysed reaction is 5-methyltetrahydropteroyltri-L-glutamate + L-homocysteine = tetrahydropteroyltri-L-glutamate + L-methionine. It functions in the pathway amino-acid biosynthesis; L-methionine biosynthesis via de novo pathway; L-methionine from L-homocysteine (MetE route): step 1/1. Its function is as follows. Catalyzes the transfer of a methyl group from 5-methyltetrahydrofolate to homocysteine resulting in methionine formation. This Paraburkholderia phymatum (strain DSM 17167 / CIP 108236 / LMG 21445 / STM815) (Burkholderia phymatum) protein is 5-methyltetrahydropteroyltriglutamate--homocysteine methyltransferase.